The following is a 185-amino-acid chain: Probable host range protein 2 (185 aa).

The protein belongs to the poxviridae C7 protein family.

Its function is as follows. Plays a role for multiplication of the virus in different cell types. This is Probable host range protein 2 from Swinepox virus (strain Kasza) (SWPV).